We begin with the raw amino-acid sequence, 251 residues long: MSLNADYQKLEPGNEVRLFSVDGTAFGMSDVLRFHAHNIAHTPEEIEAAGGDENKLPAKSIWWQGEEYKAWPCQVEGIEATTDGTSPQPKLTVANLDSSISALCLAYDDLLQAKVTIHDTLAKYLDARNFPQGNPTADPSQEKLKVFYIDARNTETDEVVEFILSSPMDLQGRMIPTRQLHSLCSWCIRNKYRTGDGCDYAGTRYFDKHNNPVDDPSLDECNGTLTACKLRHGDSNELPFGGFPGTSLIRS.

[4Fe-4S] cluster contacts are provided by C184, C198, C221, and C228.

The protein belongs to the lambda-like tail tip protein L family. The cofactor is [4Fe-4S] cluster.

It is found in the virion. The protein resides in the host cytoplasm. Its function is as follows. Part of the distal tail tip complex which plays a role in DNA injection during entry, and in tail assembly initiation during exit. The tail tip complex is assembled successively with three tail central fiber proteins J, one tail tip protein I, one tail tip protein L and one tail tip protein K. The tail tip complex interacts with tail measure protein to initiate tail tube assembly. The formation of the tail tip complex is completed by the addition of tail tip protein M, which is followed by tail tube polymerization. The protein is Tail tip protein L of Escherichia phage N15 (Bacteriophage N15).